A 339-amino-acid chain; its full sequence is DNA-directed RNA polymerase subunit alpha (339 aa).

An alpha N-terminal domain (alpha-NTD) region spans residues 1 to 235; the sequence is MTIQKNWQEL…DQLNVFVNFE (235 aa). Positions 251–339 are alpha C-terminal domain (alpha-CTD); that stretch reads FNPAFLKKVD…ELAKRFEDHY (89 aa).

Belongs to the RNA polymerase alpha chain family. As to quaternary structure, homodimer. The RNAP catalytic core consists of 2 alpha, 1 beta, 1 beta' and 1 omega subunit. When a sigma factor is associated with the core the holoenzyme is formed, which can initiate transcription.

It catalyses the reaction RNA(n) + a ribonucleoside 5'-triphosphate = RNA(n+1) + diphosphate. Functionally, DNA-dependent RNA polymerase catalyzes the transcription of DNA into RNA using the four ribonucleoside triphosphates as substrates. This chain is DNA-directed RNA polymerase subunit alpha, found in Rhodopseudomonas palustris (strain ATCC BAA-98 / CGA009).